A 252-amino-acid polypeptide reads, in one-letter code: Chitooligosaccharide deacetylase (252 aa).

Mg(2+)-binding residues include H61 and H125.

It belongs to the YdjC deacetylase family. ChbG subfamily. Homodimer. It depends on Mg(2+) as a cofactor.

It is found in the cytoplasm. The catalysed reaction is N,N'-diacetylchitobiose + H2O = N-acetyl-beta-D-glucosaminyl-(1-&gt;4)-D-glucosamine + acetate. The enzyme catalyses diacetylchitobiose-6'-phosphate + H2O = N'-monoacetylchitobiose-6'-phosphate + acetate. It functions in the pathway glycan degradation; chitin degradation. Functionally, involved in the degradation of chitin. ChbG is essential for growth on the acetylated chitooligosaccharides chitobiose and chitotriose but is dispensable for growth on cellobiose and chitosan dimer, the deacetylated form of chitobiose. Deacetylation of chitobiose-6-P and chitotriose-6-P is necessary for both the activation of the chb promoter by the regulatory protein ChbR and the hydrolysis of phosphorylated beta-glucosides by the phospho-beta-glucosidase ChbF. Catalyzes the removal of only one acetyl group from chitobiose-6-P to yield monoacetylchitobiose-6-P, the inducer of ChbR and the substrate of ChbF. In Salmonella heidelberg (strain SL476), this protein is Chitooligosaccharide deacetylase.